The chain runs to 323 residues: Aspartate carbamoyltransferase catalytic subunit (323 aa).

Residues arginine 71 and threonine 72 each contribute to the carbamoyl phosphate site. Lysine 99 provides a ligand contact to L-aspartate. Carbamoyl phosphate is bound by residues arginine 121, histidine 151, and glutamine 154. L-aspartate is bound by residues arginine 184 and arginine 239. Residues glycine 280 and proline 281 each coordinate carbamoyl phosphate.

The protein belongs to the aspartate/ornithine carbamoyltransferase superfamily. ATCase family. As to quaternary structure, heterododecamer (2C3:3R2) of six catalytic PyrB chains organized as two trimers (C3), and six regulatory PyrI chains organized as three dimers (R2).

The catalysed reaction is carbamoyl phosphate + L-aspartate = N-carbamoyl-L-aspartate + phosphate + H(+). It functions in the pathway pyrimidine metabolism; UMP biosynthesis via de novo pathway; (S)-dihydroorotate from bicarbonate: step 2/3. Functionally, catalyzes the condensation of carbamoyl phosphate and aspartate to form carbamoyl aspartate and inorganic phosphate, the committed step in the de novo pyrimidine nucleotide biosynthesis pathway. This Cupriavidus metallidurans (strain ATCC 43123 / DSM 2839 / NBRC 102507 / CH34) (Ralstonia metallidurans) protein is Aspartate carbamoyltransferase catalytic subunit.